The sequence spans 806 residues: Protein translocase subunit SecA (806 aa).

ATP contacts are provided by residues Gln-87, 105–109 (GEGKT), and Asp-493.

This sequence belongs to the SecA family. In terms of assembly, monomer and homodimer. Part of the essential Sec protein translocation apparatus which comprises SecA, SecYEG and auxiliary proteins SecDF. Other proteins may also be involved.

Its subcellular location is the cell membrane. It is found in the cytoplasm. It carries out the reaction ATP + H2O + cellular proteinSide 1 = ADP + phosphate + cellular proteinSide 2.. Its function is as follows. Part of the Sec protein translocase complex. Interacts with the SecYEG preprotein conducting channel. Has a central role in coupling the hydrolysis of ATP to the transfer of proteins into and across the cell membrane, serving as an ATP-driven molecular motor driving the stepwise translocation of polypeptide chains across the membrane. This chain is Protein translocase subunit SecA, found in Mycoplasma genitalium (strain ATCC 33530 / DSM 19775 / NCTC 10195 / G37) (Mycoplasmoides genitalium).